Here is a 92-residue protein sequence, read N- to C-terminus: Small ribosomal subunit protein uS19 (92 aa).

It belongs to the universal ribosomal protein uS19 family.

Functionally, protein S19 forms a complex with S13 that binds strongly to the 16S ribosomal RNA. The polypeptide is Small ribosomal subunit protein uS19 (Macrococcus caseolyticus (strain JCSC5402) (Macrococcoides caseolyticum)).